Here is a 218-residue protein sequence, read N- to C-terminus: Peptide methionine sulfoxide reductase MsrA (218 aa).

The active site involves cysteine 57.

It belongs to the MsrA Met sulfoxide reductase family.

The catalysed reaction is L-methionyl-[protein] + [thioredoxin]-disulfide + H2O = L-methionyl-(S)-S-oxide-[protein] + [thioredoxin]-dithiol. The enzyme catalyses [thioredoxin]-disulfide + L-methionine + H2O = L-methionine (S)-S-oxide + [thioredoxin]-dithiol. Has an important function as a repair enzyme for proteins that have been inactivated by oxidation. Catalyzes the reversible oxidation-reduction of methionine sulfoxide in proteins to methionine. The chain is Peptide methionine sulfoxide reductase MsrA from Brucella abortus (strain S19).